We begin with the raw amino-acid sequence, 653 residues long: tRNA 5-methylaminomethyl-2-thiouridine biosynthesis bifunctional protein MnmC (653 aa).

The segment at 1–236 (MPDRLVPATL…KFAMLVGEYA (236 aa)) is tRNA (mnm(5)s(2)U34)-methyltransferase. An FAD-dependent cmnm(5)s(2)U34 oxidoreductase region spans residues 260–653 (IGAGLAGCAL…IRALRGRKLG (394 aa)).

The protein in the N-terminal section; belongs to the methyltransferase superfamily. tRNA (mnm(5)s(2)U34)-methyltransferase family. This sequence in the C-terminal section; belongs to the DAO family. FAD is required as a cofactor.

The protein resides in the cytoplasm. The enzyme catalyses 5-aminomethyl-2-thiouridine(34) in tRNA + S-adenosyl-L-methionine = 5-methylaminomethyl-2-thiouridine(34) in tRNA + S-adenosyl-L-homocysteine + H(+). Catalyzes the last two steps in the biosynthesis of 5-methylaminomethyl-2-thiouridine (mnm(5)s(2)U) at the wobble position (U34) in tRNA. Catalyzes the FAD-dependent demodification of cmnm(5)s(2)U34 to nm(5)s(2)U34, followed by the transfer of a methyl group from S-adenosyl-L-methionine to nm(5)s(2)U34, to form mnm(5)s(2)U34. This chain is tRNA 5-methylaminomethyl-2-thiouridine biosynthesis bifunctional protein MnmC, found in Burkholderia vietnamiensis (strain G4 / LMG 22486) (Burkholderia cepacia (strain R1808)).